Here is a 233-residue protein sequence, read N- to C-terminus: Probable cyclic nucleotide phosphodiesterase COSY_0614 (233 aa).

Residues aspartate 10, histidine 12, aspartate 48, asparagine 78, histidine 144, histidine 183, and histidine 185 each contribute to the Fe cation site. AMP-binding positions include histidine 12, aspartate 48, and 78–79 (NH). Histidine 185 lines the AMP pocket.

The protein belongs to the cyclic nucleotide phosphodiesterase class-III family. Fe(2+) is required as a cofactor.

The chain is Probable cyclic nucleotide phosphodiesterase COSY_0614 from Vesicomyosocius okutanii subsp. Calyptogena okutanii (strain HA).